Consider the following 579-residue polypeptide: Zinc metalloproteinase nas-11 (579 aa).

The N-terminal stretch at 1–17 is a signal peptide; the sequence is MTPSLVFLIVVIVVVEG. A propeptide spanning residues 18-328 is cleaved from the precursor; that stretch reads QGWRPWDRFN…AAPGSSRLKK (311 aa). Residues 35–58 are disordered; it reads WGGNNWGTRQRNQEPHDIPPPVPP. An N-linked (GlcNAc...) asparagine glycan is attached at N256. The segment covering 293–312 has biased composition (acidic residues); it reads GDDEIPLPDADTDDEDDDDS. The interval 293–323 is disordered; the sequence is GDDEIPLPDADTDDEDDDDSTNSASGAAPGS. The Peptidase M12A domain maps to 329-536; sequence SALYFEGNLI…IELLKKMYCQ (208 aa). Cystine bridges form between C375-C535, C401-C421, C539-C575, C546-C568, and C555-C572. H430 serves as a coordination point for Zn(2+). Residue E431 is part of the active site. Residues H434 and H440 each coordinate Zn(2+). An N-linked (GlcNAc...) asparagine glycan is attached at N454. A ShKT domain is found at 539–575; sequence CDDKNVYCGAWALKDLCKNPGHDQYMAANCKKSCGLC.

Zn(2+) is required as a cofactor. As to expression, expressed in the anterior part of the intestine, CEP neurons and to a lesser extent in hypodermis.

It localises to the secreted. Functionally, metalloprotease. This is Zinc metalloproteinase nas-11 (nas-11) from Caenorhabditis elegans.